We begin with the raw amino-acid sequence, 352 residues long: Peptide chain release factor 1 (352 aa).

Q233 carries the N5-methylglutamine modification. Residues 288–309 form a disordered region; it reads NAKDRKEQVGSGDRSERIRTYN. A compositionally biased stretch (basic and acidic residues) spans 289–306; the sequence is AKDRKEQVGSGDRSERIR.

This sequence belongs to the prokaryotic/mitochondrial release factor family. Methylated by PrmC. Methylation increases the termination efficiency of RF1.

Its subcellular location is the cytoplasm. In terms of biological role, peptide chain release factor 1 directs the termination of translation in response to the peptide chain termination codons UAG and UAA. This Helicobacter pylori (strain G27) protein is Peptide chain release factor 1.